Reading from the N-terminus, the 217-residue chain is Large ribosomal subunit protein uL3 (217 aa).

Q154 carries the N5-methylglutamine modification.

This sequence belongs to the universal ribosomal protein uL3 family. As to quaternary structure, part of the 50S ribosomal subunit. Forms a cluster with proteins L14 and L19. Post-translationally, methylated by PrmB.

In terms of biological role, one of the primary rRNA binding proteins, it binds directly near the 3'-end of the 23S rRNA, where it nucleates assembly of the 50S subunit. In Burkholderia ambifaria (strain ATCC BAA-244 / DSM 16087 / CCUG 44356 / LMG 19182 / AMMD) (Burkholderia cepacia (strain AMMD)), this protein is Large ribosomal subunit protein uL3.